A 378-amino-acid polypeptide reads, in one-letter code: Cell death-related nuclease 6 (378 aa).

The N-terminal stretch at 1 to 17 (MIRQIILIVSLIGISNA) is a signal peptide. N-linked (GlcNAc...) asparagine glycans are attached at residues asparagine 51, asparagine 92, and asparagine 111.

This sequence belongs to the DNase II family.

Involved in apoptotic DNA degradation. The chain is Cell death-related nuclease 6 (crn-6) from Caenorhabditis elegans.